A 268-amino-acid chain; its full sequence is Hydroxyethylthiazole kinase (268 aa).

Met-44 lines the substrate pocket. Residues Arg-119 and Ser-165 each contribute to the ATP site. Gly-192 lines the substrate pocket.

It belongs to the Thz kinase family. Mg(2+) serves as cofactor.

The enzyme catalyses 5-(2-hydroxyethyl)-4-methylthiazole + ATP = 4-methyl-5-(2-phosphooxyethyl)-thiazole + ADP + H(+). It functions in the pathway cofactor biosynthesis; thiamine diphosphate biosynthesis; 4-methyl-5-(2-phosphoethyl)-thiazole from 5-(2-hydroxyethyl)-4-methylthiazole: step 1/1. Functionally, catalyzes the phosphorylation of the hydroxyl group of 4-methyl-5-beta-hydroxyethylthiazole (THZ). The chain is Hydroxyethylthiazole kinase from Corynebacterium glutamicum (strain R).